The chain runs to 184 residues: NADH-quinone oxidoreductase subunit B (184 aa).

[4Fe-4S] cluster is bound by residues C37, C38, C103, and C132.

This sequence belongs to the complex I 20 kDa subunit family. NDH-1 is composed of 14 different subunits. Subunits NuoB, C, D, E, F, and G constitute the peripheral sector of the complex. It depends on [4Fe-4S] cluster as a cofactor.

The protein localises to the cell membrane. The catalysed reaction is a quinone + NADH + 5 H(+)(in) = a quinol + NAD(+) + 4 H(+)(out). Its function is as follows. NDH-1 shuttles electrons from NADH, via FMN and iron-sulfur (Fe-S) centers, to quinones in the respiratory chain. The immediate electron acceptor for the enzyme in this species is believed to be a menaquinone. Couples the redox reaction to proton translocation (for every two electrons transferred, four hydrogen ions are translocated across the cytoplasmic membrane), and thus conserves the redox energy in a proton gradient. The polypeptide is NADH-quinone oxidoreductase subunit B (Nocardia farcinica (strain IFM 10152)).